The primary structure comprises 617 residues: Dihydroxy-acid dehydratase (617 aa).

Aspartate 81 is a binding site for Mg(2+). Residue cysteine 122 participates in [2Fe-2S] cluster binding. Aspartate 123 and lysine 124 together coordinate Mg(2+). N6-carboxylysine is present on lysine 124. Cysteine 195 serves as a coordination point for [2Fe-2S] cluster. Glutamate 491 contacts Mg(2+). Serine 517 serves as the catalytic Proton acceptor.

This sequence belongs to the IlvD/Edd family. As to quaternary structure, homodimer. It depends on [2Fe-2S] cluster as a cofactor. Requires Mg(2+) as cofactor.

The catalysed reaction is (2R)-2,3-dihydroxy-3-methylbutanoate = 3-methyl-2-oxobutanoate + H2O. It catalyses the reaction (2R,3R)-2,3-dihydroxy-3-methylpentanoate = (S)-3-methyl-2-oxopentanoate + H2O. The protein operates within amino-acid biosynthesis; L-isoleucine biosynthesis; L-isoleucine from 2-oxobutanoate: step 3/4. It functions in the pathway amino-acid biosynthesis; L-valine biosynthesis; L-valine from pyruvate: step 3/4. In terms of biological role, functions in the biosynthesis of branched-chain amino acids. Catalyzes the dehydration of (2R,3R)-2,3-dihydroxy-3-methylpentanoate (2,3-dihydroxy-3-methylvalerate) into 2-oxo-3-methylpentanoate (2-oxo-3-methylvalerate) and of (2R)-2,3-dihydroxy-3-methylbutanoate (2,3-dihydroxyisovalerate) into 2-oxo-3-methylbutanoate (2-oxoisovalerate), the penultimate precursor to L-isoleucine and L-valine, respectively. The polypeptide is Dihydroxy-acid dehydratase (Rhodospirillum rubrum (strain ATCC 11170 / ATH 1.1.1 / DSM 467 / LMG 4362 / NCIMB 8255 / S1)).